The chain runs to 462 residues: Argininosuccinate lyase (462 aa).

The protein belongs to the lyase 1 family. Argininosuccinate lyase subfamily.

It localises to the cytoplasm. The enzyme catalyses 2-(N(omega)-L-arginino)succinate = fumarate + L-arginine. Its pathway is amino-acid biosynthesis; L-arginine biosynthesis; L-arginine from L-ornithine and carbamoyl phosphate: step 3/3. In Bacillus cereus (strain ATCC 10987 / NRS 248), this protein is Argininosuccinate lyase.